The primary structure comprises 136 residues: Calmodulin-A (136 aa).

4 EF-hand domains span residues Glu-1–Asn-36, Pro-37–Asp-72, Asp-74–Lys-109, and Leu-110–Val-136. Ca(2+) is bound by residues Asp-14, Asp-16, Asp-18, Thr-20, Glu-25, Asp-50, Asp-52, Asn-54, Thr-56, Glu-61, Asp-87, Asp-89, Asn-91, Tyr-93, and Glu-98. At Lys-109 the chain carries N6,N6,N6-trimethyllysine. Ca(2+) is bound by residues Asp-123, Asp-125, Asp-127, Gln-129, and Glu-134.

This sequence belongs to the calmodulin family.

Functionally, calmodulin acts as part of a calcium signal transduction pathway by mediating the control of a large number of enzymes, ion channels, aquaporins and other proteins through calcium-binding. Calcium-binding is required for the activation of calmodulin. Among the enzymes to be stimulated by the calmodulin-calcium complex are a number of protein kinases, such as myosin light-chain kinases and calmodulin-dependent protein kinase type II (CaMK2), and phosphatases. This chain is Calmodulin-A (calm1), found in Oryzias latipes (Japanese rice fish).